Reading from the N-terminus, the 224-residue chain is V-type proton ATPase subunit S1-like protein (224 aa).

A helical transmembrane segment spans residues 147–167 (PAFLIGLAMSLILLLVLAYAL).

It belongs to the vacuolar ATPase subunit S1 family.

It is found in the membrane. In Homo sapiens (Human), this protein is V-type proton ATPase subunit S1-like protein (ATP6AP1L).